The primary structure comprises 670 residues: Nitrate import ATP-binding protein NrtC (670 aa).

The ABC transporter domain occupies 5–239; that stretch reads IEIDHVDRIF…RPRHRLEVVN (235 aa). 42-49 contacts ATP; the sequence is GHSGCGKS. Residues 255 to 278 are linker; it reads NQQKRAKKVGAVSQFAEAMGGNGL. A nrtA-like region spans residues 279–670; sequence EKINLDLGFI…LIDQIDQVNQ (392 aa).

This sequence belongs to the ABC transporter superfamily. Nitrate/nitrite/cyanate uptake transporter (NitT) (TC 3.A.1.16) family. As to quaternary structure, the complex is composed of two ATP-binding proteins (NrtC and NrtD), two transmembrane proteins (NrtB) and a solute-binding protein (NrtA).

The protein resides in the cell inner membrane. It carries out the reaction nitrate(out) + ATP + H2O = nitrate(in) + ADP + phosphate + H(+). Its function is as follows. Part of the ABC transporter complex NrtABCD involved in nitrate uptake. The complex is probably also involved in nitrite transport. Probably responsible for energy coupling to the transport system. In Synechocystis sp. (strain ATCC 27184 / PCC 6803 / Kazusa), this protein is Nitrate import ATP-binding protein NrtC (nrtC).